Here is a 534-residue protein sequence, read N- to C-terminus: ATP-dependent rRNA helicase RRP3 (534 aa).

The disordered stretch occupies residues 67-107 (KQQALQKQQKQQKQQEQENANHNQTESSLSSSSSTTSSSIT). 2 stretches are compositionally biased toward low complexity: residues 68–80 (QQALQKQQKQQKQ) and 91–107 (TESSLSSSSSTTSSSIT). The Q motif signature appears at 118–146 (KTFKELNLVPDLLESIESMKFTKPTPIQS). Residues 149 to 320 (IPHALEGKDI…RASLHNPVRV (172 aa)) enclose the Helicase ATP-binding domain. Residue 162–169 (AQTGSGKT) participates in ATP binding. The DEAD box motif lies at 268–271 (DEAD). Positions 347 to 492 (ILIHLLNEFM…EDKPPKEVLD (146 aa)) constitute a Helicase C-terminal domain. 2 stretches are compositionally biased toward basic and acidic residues: residues 505 to 517 (AIRQTKEIHDKRN) and 525 to 534 (NRDDADREER). Residues 505–534 (AIRQTKEIHDKRNGGGGRRRNRDDADREER) form a disordered region.

It belongs to the DEAD box helicase family. DDX47/RRP3 subfamily. Interacts with the SSU processome.

The protein localises to the nucleus. It catalyses the reaction ATP + H2O = ADP + phosphate + H(+). In terms of biological role, ATP-dependent rRNA helicase required for pre-ribosomal RNA processing. Involved in the maturation of the 35S-pre-rRNA and to its cleavage to mature 18S rRNA. The protein is ATP-dependent rRNA helicase RRP3 of Candida albicans (strain SC5314 / ATCC MYA-2876) (Yeast).